The primary structure comprises 283 residues: Pantothenate synthetase (283 aa).

30–37 (MGYYHSGH) contacts ATP. The active-site Proton donor is histidine 37. Glutamine 61 lines the (R)-pantoate pocket. Glutamine 61 is a binding site for beta-alanine. 147–150 (GQKD) lines the ATP pocket. Glutamine 153 is a binding site for (R)-pantoate. ATP contacts are provided by residues valine 176 and 184-187 (MSSR).

Belongs to the pantothenate synthetase family. Homodimer.

It is found in the cytoplasm. The catalysed reaction is (R)-pantoate + beta-alanine + ATP = (R)-pantothenate + AMP + diphosphate + H(+). It participates in cofactor biosynthesis; (R)-pantothenate biosynthesis; (R)-pantothenate from (R)-pantoate and beta-alanine: step 1/1. Its function is as follows. Catalyzes the condensation of pantoate with beta-alanine in an ATP-dependent reaction via a pantoyl-adenylate intermediate. The protein is Pantothenate synthetase of Nitratidesulfovibrio vulgaris (strain DSM 19637 / Miyazaki F) (Desulfovibrio vulgaris).